The following is a 229-amino-acid chain: ATP-dependent dethiobiotin synthetase BioD (229 aa).

Residue 15–20 coordinates ATP; that stretch reads EIGKTL. Mg(2+) is bound at residue T19. K40 is an active-site residue. Residues D57, 118–121, and 207–209 each bind ATP; these read EGVG and PRL. Mg(2+) is bound by residues D57 and E118.

The protein belongs to the dethiobiotin synthetase family. Homodimer. The cofactor is Mg(2+).

It localises to the cytoplasm. The catalysed reaction is (7R,8S)-7,8-diammoniononanoate + CO2 + ATP = (4R,5S)-dethiobiotin + ADP + phosphate + 3 H(+). The protein operates within cofactor biosynthesis; biotin biosynthesis; biotin from 7,8-diaminononanoate: step 1/2. Functionally, catalyzes a mechanistically unusual reaction, the ATP-dependent insertion of CO2 between the N7 and N8 nitrogen atoms of 7,8-diaminopelargonic acid (DAPA, also called 7,8-diammoniononanoate) to form a ureido ring. The chain is ATP-dependent dethiobiotin synthetase BioD from Ralstonia nicotianae (strain ATCC BAA-1114 / GMI1000) (Ralstonia solanacearum).